The chain runs to 742 residues: Two-component response regulator-like PRR37 (742 aa).

The Response regulatory domain occupies 63 to 181; the sequence is KVLLVDSDDS…ELKNLWQHVW (119 aa). The segment covering 186–195 has biased composition (low complexity); it reads SSSGSGSESG. Disordered regions lie at residues 186 to 249, 290 to 346, 375 to 402, 478 to 570, 590 to 671, and 697 to 742; these read SSSG…SWTK, PCTS…PLQN, DAQQ…NRDN, MKSN…VQSN, NGGS…GNDM, and NFGK…AADR. Residues 236 to 248 are compositionally biased toward polar residues; sequence DNGSGTQAQSSWT. Residues 299-313 show a composition bias toward basic and acidic residues; that stretch reads KQKETNDDFKGKDLE. The span at 318–330 shows a compositional bias: polar residues; the sequence is RNLNTAYQSSPNE. Residues 331 to 341 show a composition bias toward basic and acidic residues; sequence RSIKPTDRRNE. Polar residues predominate over residues 380–390; it reads ARATNAPNCSS. A compositionally biased stretch (low complexity) spans 490–502; that stretch reads GSNGSSNNNDMGS. Residues 503–512 are compositionally biased toward polar residues; that stretch reads TTKNVVTKPS. The span at 618–634 shows a compositional bias: low complexity; sequence NGSNSGSNNGSNGQNGS. Residues 656-667 show a composition bias toward gly residues; the sequence is GPGGGNGSGSGS. Residues 682-724 enclose the CCT domain; that stretch reads RVAAVIKFRQKRKERNFGKKVRYQSRKRLAEQRPRVRGQFVRQ. Positions 697–708 are enriched in basic residues; the sequence is NFGKKVRYQSRK. Positions 719–731 are enriched in low complexity; it reads GQFVRQAVQDQQQ.

The protein belongs to the ARR-like family.

It localises to the nucleus. In terms of biological role, controls photoperiodic flowering response. Seems to be one of the component of the circadian clock. Expression of several members of the ARR-like family is controlled by circadian rhythm. The particular coordinated sequential expression of PRR73, PRR37, PRR95, PRR59 and PPR1 result to circadian waves that may be at the basis of the endogenous circadian clock. The chain is Two-component response regulator-like PRR37 (PRR37) from Oryza sativa subsp. indica (Rice).